The sequence spans 644 residues: 1,4-alpha-glucan branching enzyme GlgB (644 aa).

Aspartate 309 acts as the Nucleophile in catalysis. Glutamate 362 acts as the Proton donor in catalysis.

It belongs to the glycosyl hydrolase 13 family. GlgB subfamily. In terms of assembly, monomer.

The enzyme catalyses Transfers a segment of a (1-&gt;4)-alpha-D-glucan chain to a primary hydroxy group in a similar glucan chain.. It participates in glycan biosynthesis; glycogen biosynthesis. Catalyzes the formation of the alpha-1,6-glucosidic linkages in glycogen by scission of a 1,4-alpha-linked oligosaccharide from growing alpha-1,4-glucan chains and the subsequent attachment of the oligosaccharide to the alpha-1,6 position. This chain is 1,4-alpha-glucan branching enzyme GlgB, found in Cutibacterium acnes (strain DSM 16379 / KPA171202) (Propionibacterium acnes).